Here is a 380-residue protein sequence, read N- to C-terminus: Alkaline protease (380 aa).

Residues 1-27 (MKKPLGKIVASTALLISVAFSSSIASA) form the signal peptide. A propeptide spanning residues 28 to 112 (AEEAKEKYLI…EEDAEVTTMA (85 aa)) is cleaved from the precursor. The region spanning 34–111 (KYLIGFNEQE…IEEDAEVTTM (78 aa)) is the Inhibitor I9 domain. Residue Q113 participates in Ca(2+) binding. Residues 116–379 (PWGISRVQAP…SGLVNAEAAT (264 aa)) enclose the Peptidase S8 domain. The Charge relay system role is filled by D143. D151 serves as a coordination point for Ca(2+). H173 serves as the catalytic Charge relay system. L184, N186, I188, V190, A274, Y276, and A279 together coordinate Ca(2+). Residue S326 is the Charge relay system of the active site.

This sequence belongs to the peptidase S8 family. Ca(2+) is required as a cofactor.

It localises to the secreted. This chain is Alkaline protease, found in Alkalihalobacillus alcalophilus (Bacillus alcalophilus).